Reading from the N-terminus, the 475-residue chain is MKMPLNIGLIHFVGIGGIGMSGIAEVFHNLGYKVQGSDQIDNANVKRLQDKGIQVHVGHHAENLGDAEFVVLSTAIKKTNPEYIAAKERHLPLVKRAEMLAELMRFRRAIAVGGTHGKTTTTSMIAALLDAGSFDPMVINGGIINAYGTNARMGEGDWMVVEADESDGTFLKLPADIAVVTNIDREHLDHYGSFAAVRDAFRQFVENVPFYGFAVLCIDHPEVQSLASRIDDRWVITYGANPQADIRFLNLSMDGQKTYFDVFMRSRKTGRETELKNLVLPMSGQHNVSNATAAIAIAHELGISNESIKKGLAGFGGVKRRFTQIGSWRGVEIFDDYGHHPVEIKAVLCAARESAKGRVIAIAQPHRYSRLYHLFDDFAACFNDADIVLIAPVYAAGEEPITGFGARELVEHIQMAGHRDVRLIDCLEDVVSIVSTFSKSGDYVVFLGAGNITQWACALPNQLAVFDNNDKFSAD.

114 to 120 (GTHGKTT) provides a ligand contact to ATP.

It belongs to the MurCDEF family.

It is found in the cytoplasm. It carries out the reaction UDP-N-acetyl-alpha-D-muramate + L-alanine + ATP = UDP-N-acetyl-alpha-D-muramoyl-L-alanine + ADP + phosphate + H(+). It participates in cell wall biogenesis; peptidoglycan biosynthesis. Its function is as follows. Cell wall formation. This Bartonella henselae (strain ATCC 49882 / DSM 28221 / CCUG 30454 / Houston 1) (Rochalimaea henselae) protein is UDP-N-acetylmuramate--L-alanine ligase.